We begin with the raw amino-acid sequence, 237 residues long: Ribonuclease 3 (237 aa).

The RNase III domain maps to 6–133 (LIEVEKLIGI…VIAAVYLDKG (128 aa)). Mg(2+) is bound at residue Glu46. Asp50 is a catalytic residue. Positions 119 and 122 each coordinate Mg(2+). The active site involves Glu122. Residues 160-229 (DFKTRLQEVL…AKAALQRLGE (70 aa)) enclose the DRBM domain.

The protein belongs to the ribonuclease III family. In terms of assembly, homodimer. Requires Mg(2+) as cofactor.

It is found in the cytoplasm. The catalysed reaction is Endonucleolytic cleavage to 5'-phosphomonoester.. Digests double-stranded RNA. Involved in the processing of primary rRNA transcript to yield the immediate precursors to the large and small rRNAs (23S and 16S). Processes some mRNAs, and tRNAs when they are encoded in the rRNA operon. Processes pre-crRNA and tracrRNA of type II CRISPR loci if present in the organism. This Clostridium perfringens (strain 13 / Type A) protein is Ribonuclease 3.